A 249-amino-acid chain; its full sequence is Ubiquinone/menaquinone biosynthesis C-methyltransferase UbiE (249 aa).

Residues Thr72, Asp93, and 121 to 122 (DA) each bind S-adenosyl-L-methionine.

The protein belongs to the class I-like SAM-binding methyltransferase superfamily. MenG/UbiE family.

It carries out the reaction a 2-demethylmenaquinol + S-adenosyl-L-methionine = a menaquinol + S-adenosyl-L-homocysteine + H(+). It catalyses the reaction a 2-methoxy-6-(all-trans-polyprenyl)benzene-1,4-diol + S-adenosyl-L-methionine = a 5-methoxy-2-methyl-3-(all-trans-polyprenyl)benzene-1,4-diol + S-adenosyl-L-homocysteine + H(+). Its pathway is quinol/quinone metabolism; menaquinone biosynthesis; menaquinol from 1,4-dihydroxy-2-naphthoate: step 2/2. It functions in the pathway cofactor biosynthesis; ubiquinone biosynthesis. In terms of biological role, methyltransferase required for the conversion of demethylmenaquinol (DMKH2) to menaquinol (MKH2) and the conversion of 2-polyprenyl-6-methoxy-1,4-benzoquinol (DDMQH2) to 2-polyprenyl-3-methyl-6-methoxy-1,4-benzoquinol (DMQH2). The sequence is that of Ubiquinone/menaquinone biosynthesis C-methyltransferase UbiE from Cellvibrio japonicus (strain Ueda107) (Pseudomonas fluorescens subsp. cellulosa).